Reading from the N-terminus, the 270-residue chain is 3-methyl-2-oxobutanoate hydroxymethyltransferase (270 aa).

Asp41 and Asp80 together coordinate Mg(2+). 3-methyl-2-oxobutanoate contacts are provided by residues 41–42, Asp80, and Lys109; that span reads DS. A Mg(2+)-binding site is contributed by Glu111. The Proton acceptor role is filled by Glu178.

This sequence belongs to the PanB family. In terms of assembly, homodecamer; pentamer of dimers. It depends on Mg(2+) as a cofactor.

The protein resides in the cytoplasm. The catalysed reaction is 3-methyl-2-oxobutanoate + (6R)-5,10-methylene-5,6,7,8-tetrahydrofolate + H2O = 2-dehydropantoate + (6S)-5,6,7,8-tetrahydrofolate. It participates in cofactor biosynthesis; (R)-pantothenate biosynthesis; (R)-pantoate from 3-methyl-2-oxobutanoate: step 1/2. Its function is as follows. Catalyzes the reversible reaction in which hydroxymethyl group from 5,10-methylenetetrahydrofolate is transferred onto alpha-ketoisovalerate to form ketopantoate. This Thermotoga maritima (strain ATCC 43589 / DSM 3109 / JCM 10099 / NBRC 100826 / MSB8) protein is 3-methyl-2-oxobutanoate hydroxymethyltransferase.